The sequence spans 448 residues: Methionine aminopeptidase 2 (448 aa).

A disordered region spans residues 1–94 (MAAQVTDALK…PRVLLSNLFP (94 aa)). Residues 37–50 (AEAEDSDDDDEEPV) are compositionally biased toward acidic residues. Positions 61-74 (KKKRKRKKKPKKKA) are enriched in basic residues. H201 lines the substrate pocket. Positions 221, 232, and 301 each coordinate a divalent metal cation. Residue H309 coordinates substrate. Positions 334 and 429 each coordinate a divalent metal cation.

Belongs to the peptidase M24A family. Methionine aminopeptidase eukaryotic type 2 subfamily. Co(2+) serves as cofactor. Requires Zn(2+) as cofactor. It depends on Mn(2+) as a cofactor. Fe(2+) is required as a cofactor.

It localises to the cytoplasm. It carries out the reaction Release of N-terminal amino acids, preferentially methionine, from peptides and arylamides.. Cotranslationally removes the N-terminal methionine from nascent proteins. The N-terminal methionine is often cleaved when the second residue in the primary sequence is small and uncharged (Met-Ala-, Cys, Gly, Pro, Ser, Thr, or Val). This Botryotinia fuckeliana (strain B05.10) (Noble rot fungus) protein is Methionine aminopeptidase 2.